Consider the following 1202-residue polypeptide: DNA-directed RNA polymerase subunit beta (1202 aa).

The tract at residues N1154–N1202 is disordered. A compositionally biased stretch (basic and acidic residues) spans Y1171–S1188.

The protein belongs to the RNA polymerase beta chain family. As to quaternary structure, the RNAP catalytic core consists of 2 alpha, 1 beta, 1 beta' and 1 omega subunit. When a sigma factor is associated with the core the holoenzyme is formed, which can initiate transcription.

The catalysed reaction is RNA(n) + a ribonucleoside 5'-triphosphate = RNA(n+1) + diphosphate. In terms of biological role, DNA-dependent RNA polymerase catalyzes the transcription of DNA into RNA using the four ribonucleoside triphosphates as substrates. This is DNA-directed RNA polymerase subunit beta from Limosilactobacillus reuteri (strain DSM 20016) (Lactobacillus reuteri).